The primary structure comprises 469 residues: ATP synthase subunit beta (469 aa).

155 to 162 (GGAGVGKT) provides a ligand contact to ATP.

Belongs to the ATPase alpha/beta chains family. F-type ATPases have 2 components, CF(1) - the catalytic core - and CF(0) - the membrane proton channel. CF(1) has five subunits: alpha(3), beta(3), gamma(1), delta(1), epsilon(1). CF(0) has three main subunits: a(1), b(2) and c(9-12). The alpha and beta chains form an alternating ring which encloses part of the gamma chain. CF(1) is attached to CF(0) by a central stalk formed by the gamma and epsilon chains, while a peripheral stalk is formed by the delta and b chains.

The protein resides in the cell inner membrane. It catalyses the reaction ATP + H2O + 4 H(+)(in) = ADP + phosphate + 5 H(+)(out). Functionally, produces ATP from ADP in the presence of a proton gradient across the membrane. The catalytic sites are hosted primarily by the beta subunits. This Syntrophobacter fumaroxidans (strain DSM 10017 / MPOB) protein is ATP synthase subunit beta.